The following is a 96-amino-acid chain: Small ribosomal subunit protein bS6 (96 aa).

Belongs to the bacterial ribosomal protein bS6 family.

In terms of biological role, binds together with bS18 to 16S ribosomal RNA. The chain is Small ribosomal subunit protein bS6 from Streptococcus thermophilus (strain ATCC BAA-491 / LMD-9).